The following is an 877-amino-acid chain: Dystroglycan 1 (877 aa).

Positions 1 to 29 are cleaved as a signal peptide; the sequence is MRMSAGLSLLIPLWGRTFLLLLSVAVTQS. The tract at residues 30–408 is required for laminin recognition; sequence RWPSEPSDAV…GHIRPTMTIP (379 aa). Residues 49 to 71 form an O-glycosylated at one site region; it reads SMHSVLSDLHEAVPTVVGIPDGT. Asn-141 is a glycosylation site (N-linked (GlcNAc...) asparagine). A disulfide bridge links Cys-182 with Cys-264. The tract at residues 316 to 468 is mucin-like domain; sequence ATPTPVTAIG…PPTRIRTTTS (153 aa). 3 O-linked (Man6P...) threonine glycosylation sites follow: Thr-317, Thr-319, and Thr-379. Disordered stretches follow at residues 380–444 and 458–480; these read PTLG…PVPR and SPPTRIRTTTSGLPRGEPNQRPE. Over residues 413–433 the composition is skewed to low complexity; that stretch reads PTAVATPPTPTTKNPRVSXPT. The tract at residues 446–468 is O-glycosylated at seven sites with GalNAc; that stretch reads TTKAPITRLETASPPTRIRTTTS. A Peptidase S72 domain is found at 585–694; it reads RAPARFTAKF…MSIAVTGSGS (110 aa). N-linked (GlcNAc...) asparagine glycosylation is found at Asn-623, Asn-631, and Asn-643. Residues Cys-651 and Cys-695 are joined by a disulfide bond. Residues 706–717 show a composition bias toward pro residues; the sequence is PKRVPSEAPPTE. Residues 706–727 form a disordered region; it reads PKRVPSEAPPTEVPDRDPEKSS. The span at 718–727 shows a compositional bias: basic and acidic residues; it reads VPDRDPEKSS. The chain crosses the membrane as a helical span at residues 732 to 757; sequence YLHTVIPAVVVAAILLIAGIIAMICY. A Nuclear localization signal motif is present at residues 758–764; the sequence is RKKRKGK. Position 772 is a phosphothreonine (Thr-772). The segment at 801-877 is required for interaction with CAV3; sequence LQEEKAPLPP…YRSPPPYVPP (77 aa). The interval 805-877 is disordered; it reads KAPLPPPEYP…YRSPPPYVPP (73 aa). Positions 814-828 are enriched in polar residues; that stretch reads PNQSVPETTPLNQDT. Residues 841–852 are compositionally biased toward pro residues; that stretch reads NAPPYQPPPPFT. The segment at 862 to 877 is required for binding DMD and UTRN; sequence PKNMTPYRSPPPYVPP. Positions 871 to 874 match the PPXY motif motif; it reads PPPY. Residue Tyr-874 is modified to Phosphotyrosine; by SRC.

As to quaternary structure, monomer. Heterodimer of alpha- and beta-dystroglycan subunits which are the central components of the dystrophin-glycoprotein complex. This complex then can form a dystrophin-associated glycoprotein complex (DGC) which is composed of three subcomplexes: a cytoplasmic complex comprised of DMD (or UTRN), DTNA and a number of syntrophins, such as SNTB1, SNTB2, SNTG1 and SNTG2, the transmembrane dystroglycan complex, and the sarcoglycan-sarcospan complex. Interacts (via the N-terminal of alphaDAG1) with LARGE1; the interaction enhances laminin binding. Interacts with SGCD. Interacts with AGR2 and AGR3. Interacts (betaDAG1) with DMD; the interaction is inhibited by phosphorylation on the PPXY motif. Interacts (betaDAG1, via its PPXY motif) with UTRN (via its WWW and ZZ domains); the interaction is inhibited by phosphorylation on the PPXY motif. Interacts (betaDAG1, via its phosphorylated PPXY motif) with the SH2 domain-containing proteins, FYN, CSK, NCK and SHC. Interacts (betaDAG1) with CAV3 (via a central WW-like domain); the interaction disrupts the binding of DMD. BetaDAG1 directly interacts with ANK3, but not with ANK2; this interaction does not interfere with DMD-binding and is required for retention at costameres. Identified in a dystroglycan complex that contains at least PRX, DRP2, UTRN, DMD and DAG1. Interacts with POMGNT1. BetaDAG1 interacts with CD93. Post-translationally, O-glycosylated. POMGNT1 catalyzes the initial addition of N-acetylglucosamine, giving rise to the GlcNAc(beta1-2)Man(alpha1-)O-Ser/Thr moiety and thus providing the necessary basis for the addition of further carbohydrate moieties. Heavily O-glycosylated comprising of up to two thirds of its mass and the carbohydrate composition differs depending on tissue type. Mucin-type O-glycosylation is important for ligand binding activity. O-mannosylation of alpha-DAG1 is found in high abundance in both brain and muscle where the most abundant glycan is Sia-alpha-2-3-Gal-beta-1-4-Glc-NAc-beta-1-2-Man. In muscle, glycosylation on Thr-317, Thr-319 and Thr-379 by a phosphorylated O-mannosyl glycan with the structure 2-(N-acetylamido)-2-deoxygalactosyl-beta-1,3-2-(N-acetylamido)-2-deoxyglucosyl-beta-1,4-6-phosphomannose is mediated by like-acetylglucosaminyltransferase (LARGE1) protein amd is required for laminin binding. O-glycosylated in the N-terminal region with a core 1 or possibly core 8 glycan. The brain form displays a unique glycosylation pattern which is absent in other tissues; this form shows enhanced binding to laminin LAMA5 compared to the skeletal muscle form. In terms of processing, N-glycosylated. Autolytic cleavage produces the alpha and beta subunits. In cutaneous cells, as well as in certain pathological conditions, shedding of beta-dystroglycan can occur releasing a peptide of about 30 kDa. Post-translationally, SRC-mediated phosphorylation of the PPXY motif of the beta subunit recruits SH2 domain-containing proteins, but inhibits binding to WWW domain-containing proteins, DMD and UTRN. This phosphorylation also inhibits nuclear entry.

It is found in the secreted. The protein resides in the extracellular space. It localises to the cell membrane. Its subcellular location is the cytoplasm. The protein localises to the cytoskeleton. It is found in the nucleus. The protein resides in the nucleoplasm. It localises to the sarcolemma. Its subcellular location is the postsynaptic cell membrane. In terms of biological role, the dystroglycan complex is involved in a number of processes including laminin and basement membrane assembly, sarcolemmal stability, cell survival, peripheral nerve myelination, nodal structure, cell migration, and epithelial polarization. Functionally, extracellular peripheral glycoprotein that acts as a receptor for extracellular matrix proteins containing laminin-G domains. Receptor for laminin-2 (LAMA2) and agrin in peripheral nerve Schwann cells. Also acts as a receptor for laminin LAMA5. Its function is as follows. Transmembrane protein that plays important roles in connecting the extracellular matrix to the cytoskeleton. Acts as a cell adhesion receptor in both muscle and non-muscle tissues. Receptor for both DMD and UTRN and, through these interactions, scaffolds axin to the cytoskeleton. Also functions in cell adhesion-mediated signaling and implicated in cell polarity. The protein is Dystroglycan 1 of Sus scrofa (Pig).